The primary structure comprises 512 residues: Alpha-amylase (512 aa).

The N-terminal stretch at 1–15 (MKLFVLIALFGLGFA) is a signal peptide. Cystine bridges form between Cys43–Cys101, Cys85–Cys130, and Cys156–Cys175. 3 residues coordinate Ca(2+): Asn115, Arg173, and Asp182. Arg210 contributes to the chloride binding site. Asp212 (nucleophile) is an active-site residue. Ca(2+) is bound at residue His216. Glu248 acts as the Proton donor in catalysis. Residue Arg352 coordinates chloride. 2 disulfide bridges follow: Cys394–Cys400 and Cys466–Cys478. N-linked (GlcNAc...) asparagine glycosylation occurs at Asn496.

The protein belongs to the glycosyl hydrolase 13 family. The cofactor is Ca(2+). Chloride is required as a cofactor.

Its subcellular location is the secreted. The enzyme catalyses Endohydrolysis of (1-&gt;4)-alpha-D-glucosidic linkages in polysaccharides containing three or more (1-&gt;4)-alpha-linked D-glucose units.. Catalyzes the hydrolysis of alpha-1,4 glycosidic linkages in starch, glycogen and similar oligosaccharides. The protein is Alpha-amylase of Oryzias latipes (Japanese rice fish).